Consider the following 462-residue polypeptide: A-type ATP synthase subunit B (462 aa).

This sequence belongs to the ATPase alpha/beta chains family. Has multiple subunits with at least A(3), B(3), C, D, E, F, H, I and proteolipid K(x).

It localises to the cell membrane. In terms of biological role, component of the A-type ATP synthase that produces ATP from ADP in the presence of a proton gradient across the membrane. The B chain is a regulatory subunit. This chain is A-type ATP synthase subunit B, found in Methanococcus maripaludis (strain DSM 14266 / JCM 13030 / NBRC 101832 / S2 / LL).